Here is a 327-residue protein sequence, read N- to C-terminus: F-box/LRR-repeat protein At3g58900 (327 aa).

Residues 1 to 47 (MDLFSSLPNELLYHILSFLSTKEAALTSVLSKRWRNLFAFVPYLEFD) enclose the F-box domain. LRR repeat units follow at residues 116-144 (DLFI…RVGS), 161-192 (KTLV…DMTN), 199-230 (NVTV…SFDA), 235-261 (YFYY…QINL), and 277-308 (EMLV…YLSP).

This Arabidopsis thaliana (Mouse-ear cress) protein is F-box/LRR-repeat protein At3g58900.